The chain runs to 260 residues: Trialysin (260 aa).

A signal peptide spans Met1–Ser19. A propeptide spans Tyr20–Arg55 (removed in mature form, probably by the serine protease triapsin).

This sequence belongs to the redulysin-like family. Expressed in salivary glands.

It localises to the secreted. Its subcellular location is the target cell membrane. In terms of biological role, pore-forming protein that induces lysis of T.cruzi trypomastigotes, bacteria E.coli and human red blood cells. The parasite lysis is much more important than the hemolysis, probably due to difference in membrane composition. Its action on protozoan parasites and bacteria may indicate a role in the control of microorganism growth in the salivary glands. This Triatoma infestans (Assassin bug) protein is Trialysin.